The primary structure comprises 221 residues: Hypoxanthine-guanine phosphoribosyltransferase (221 aa).

Ser2 carries the post-translational modification N-acetylserine. Residues Lys85, 110 to 118 (DEVDDTRTT), Lys159, and 188 to 194 (WYAYPWE) each bind GMP. Asp114 acts as the Proton acceptor in catalysis.

The protein belongs to the purine/pyrimidine phosphoribosyltransferase family. As to quaternary structure, dimer. Mg(2+) serves as cofactor.

Its subcellular location is the cytoplasm. The protein resides in the nucleus. The catalysed reaction is IMP + diphosphate = hypoxanthine + 5-phospho-alpha-D-ribose 1-diphosphate. It catalyses the reaction GMP + diphosphate = guanine + 5-phospho-alpha-D-ribose 1-diphosphate. It participates in purine metabolism; IMP biosynthesis via salvage pathway; IMP from hypoxanthine: step 1/1. Subject to feedback inhibition by GMP. Converts guanine to guanosine monophosphate, and hypoxanthine to inosine monophosphate. Transfers the 5-phosphoribosyl group from 5-phosphoribosylpyrophosphate onto the purine. Plays a central role in the generation of purine nucleotides through the purine salvage pathway. The sequence is that of Hypoxanthine-guanine phosphoribosyltransferase (HPT1) from Saccharomyces cerevisiae (strain ATCC 204508 / S288c) (Baker's yeast).